A 703-amino-acid chain; its full sequence is Protein teflon (703 aa).

The C2H2-type 1 zinc finger occupies 32 to 55 (MLCHFCKDIFTHLPEFMRHLQWSH). Disordered stretches follow at residues 78-111 (SSED…PGSS), 140-161 (EQSY…ARKP), 205-239 (NDVS…MPSL), and 339-434 (SQQP…SKLE). Polar residues predominate over residues 84-94 (QSQANSCSSGD). Residues 148 to 161 (PDSRTEGFRCARKP) are compositionally biased toward basic and acidic residues. 2 stretches are compositionally biased toward polar residues: residues 339–352 (SQQP…NNAV) and 364–373 (SLTVISSSPI). C2H2-type zinc fingers lie at residues 649 to 672 (YFCE…QSVH) and 677 to 700 (FTCS…KTVH).

This sequence belongs to the Teflon family.

The protein resides in the nucleus. It localises to the chromosome. Specifically required in males for proper segregation of autosomal bivalents at meiosis I. Expression is required in the male germ line prior to spermatocyte stage S4. May have a role as a bridging molecule maintaining adhesion to hold autosome bivalents together via heterochromatic connections. This is Protein teflon from Drosophila persimilis (Fruit fly).